We begin with the raw amino-acid sequence, 542 residues long: Amino-acid acetyltransferase, mitochondrial (542 aa).

The transit peptide at 1–14 (MLFRRLLTTKVGYH) directs the protein to the mitochondrion. Residues 368-534 (AGSAQLPAHK…LREYITYVRD (167 aa)) enclose the N-acetyltransferase domain.

It belongs to the acetyltransferase family.

It localises to the mitochondrion. The enzyme catalyses L-glutamate + acetyl-CoA = N-acetyl-L-glutamate + CoA + H(+). Its pathway is amino-acid biosynthesis; L-arginine biosynthesis; N(2)-acetyl-L-ornithine from L-glutamate: step 1/4. In terms of biological role, N-acetylglutamate synthase involved in arginine biosynthesis. The polypeptide is Amino-acid acetyltransferase, mitochondrial (ARG2) (Eremothecium gossypii (strain ATCC 10895 / CBS 109.51 / FGSC 9923 / NRRL Y-1056) (Yeast)).